A 631-amino-acid chain; its full sequence is Chaperone protein DnaK (631 aa).

The residue at position 175 (Thr175) is a Phosphothreonine; by autocatalysis. Positions 586–631 are disordered; the sequence is GAEGAAAGAGAAGAAGAGASAGSASGSDDDTVEAEVVDDDDDKDNK. A compositionally biased stretch (low complexity) spans 602 to 611; the sequence is AGASAGSASG. Acidic residues predominate over residues 612–631; it reads SDDDTVEAEVVDDDDDKDNK.

The protein belongs to the heat shock protein 70 family.

Functionally, acts as a chaperone. The chain is Chaperone protein DnaK from Bifidobacterium longum subsp. infantis (strain ATCC 15697 / DSM 20088 / JCM 1222 / NCTC 11817 / S12).